Consider the following 150-residue polypeptide: Ribosome maturation factor RimP (150 aa).

The protein belongs to the RimP family.

It localises to the cytoplasm. Functionally, required for maturation of 30S ribosomal subunits. This Escherichia coli O9:H4 (strain HS) protein is Ribosome maturation factor RimP.